The primary structure comprises 197 residues: Imidazoleglycerol-phosphate dehydratase (197 aa).

It belongs to the imidazoleglycerol-phosphate dehydratase family.

It is found in the cytoplasm. It catalyses the reaction D-erythro-1-(imidazol-4-yl)glycerol 3-phosphate = 3-(imidazol-4-yl)-2-oxopropyl phosphate + H2O. The protein operates within amino-acid biosynthesis; L-histidine biosynthesis; L-histidine from 5-phospho-alpha-D-ribose 1-diphosphate: step 6/9. The chain is Imidazoleglycerol-phosphate dehydratase from Marinomonas sp. (strain MWYL1).